Here is a 389-residue protein sequence, read N- to C-terminus: Cytochrome b (389 aa).

The next 8 membrane-spanning stretches (helical) occupy residues 32–52 (FGFF…LLAM), 76–98 (WLLR…IHML), 113–133 (LWVS…LGYV), 179–199 (FFSL…LHII), 225–245 (FTIK…TFVF), 290–310 (LGVL…FLTI), 325–345 (LFWS…QPAA), and 353–373 (LYST…IYIV). Residues His-82 and His-96 each contribute to the heme b site. Heme b is bound by residues His-183 and His-197.

This sequence belongs to the cytochrome b family. The main subunits of complex b-c1 are: cytochrome b, cytochrome c1 and the Rieske protein. Requires heme b as cofactor.

The protein localises to the mitochondrion inner membrane. Functionally, component of the ubiquinol-cytochrome c reductase complex (complex III or cytochrome b-c1 complex) that is part of the mitochondrial respiratory chain. The b-c1 complex mediates electron transfer from ubiquinol to cytochrome c. Contributes to the generation of a proton gradient across the mitochondrial membrane that is then used for ATP synthesis. In Dictyostelium discoideum (Social amoeba), this protein is Cytochrome b (cytB).